A 674-amino-acid polypeptide reads, in one-letter code: Zyxin (674 aa).

Residues 35–447 (PPKPKVNPFR…PHQDQTSGSQ (413 aa)) are disordered. Over residues 86–109 (LPPPPPNEEPMSPPGSSFPPPPPS) the composition is skewed to pro residues. The span at 110–120 (FGDDGPGSPLG) shows a compositional bias: low complexity. Composition is skewed to pro residues over residues 121-148 (LFPPPPPPEFSEPFPPPIEESFPSPPPL), 162-180 (ASVPPPPPPLPSPPEPAPP), 187-209 (KPAPVLPKPPPPSAFPKPEPPQS), 222-240 (KPSPPSAVAPKPVAPPPVA), and 254-266 (AAPPTHTPAPPAP). Basic and acidic residues-rich tracts occupy residues 328–341 (AKHEAPPPAAKHEA) and 358–387 (QRDKPRVLEKPRANVRDLVPEPPVETRGER). LIM zinc-binding domains are found at residues 481–542 (ELCG…TLEC), 543–600 (CAVC…RRYA), and 601–671 (PRCT…RARA).

The protein belongs to the zyxin/ajuba family. As to quaternary structure, interacts (via LIM2 domain) with hesx1/anf1.

It localises to the cytoplasm. The protein localises to the cytoskeleton. Its subcellular location is the cell junction. The protein resides in the focal adhesion. Its function is as follows. Adhesion plaque protein. May be a component of a signal transduction pathway that mediates adhesion-stimulated changes in gene expression. Suppresses the transcription-repressing activity of hesx1/anf1. The sequence is that of Zyxin from Xenopus tropicalis (Western clawed frog).